Consider the following 277-residue polypeptide: Bifunctional protein FolD (277 aa).

NADP(+) is bound by residues 160–162 (GAS), S185, and I226.

It belongs to the tetrahydrofolate dehydrogenase/cyclohydrolase family. Homodimer.

It carries out the reaction (6R)-5,10-methylene-5,6,7,8-tetrahydrofolate + NADP(+) = (6R)-5,10-methenyltetrahydrofolate + NADPH. It catalyses the reaction (6R)-5,10-methenyltetrahydrofolate + H2O = (6R)-10-formyltetrahydrofolate + H(+). Its pathway is one-carbon metabolism; tetrahydrofolate interconversion. In terms of biological role, catalyzes the oxidation of 5,10-methylenetetrahydrofolate to 5,10-methenyltetrahydrofolate and then the hydrolysis of 5,10-methenyltetrahydrofolate to 10-formyltetrahydrofolate. The polypeptide is Bifunctional protein FolD (Ruthia magnifica subsp. Calyptogena magnifica).